Here is a 154-residue protein sequence, read N- to C-terminus: Myoglobin (154 aa).

The region spanning 2 to 148 is the Globin domain; that stretch reads GLSDGEWQLV…FRNDMAAKYK (147 aa). S4 bears the Phosphoserine mark. Nitrite is bound at residue H65. An O2-binding site is contributed by H65. T68 is modified (phosphothreonine). H94 is a binding site for heme b.

This sequence belongs to the globin family. Monomeric.

The protein localises to the cytoplasm. Its subcellular location is the sarcoplasm. It carries out the reaction Fe(III)-heme b-[protein] + nitric oxide + H2O = Fe(II)-heme b-[protein] + nitrite + 2 H(+). It catalyses the reaction H2O2 + AH2 = A + 2 H2O. Its function is as follows. Monomeric heme protein which primary function is to store oxygen and facilitate its diffusion within muscle tissues. Reversibly binds oxygen through a pentacoordinated heme iron and enables its timely and efficient release as needed during periods of heightened demand. Depending on the oxidative conditions of tissues and cells, and in addition to its ability to bind oxygen, it also has a nitrite reductase activity whereby it regulates the production of bioactive nitric oxide. Under stress conditions, like hypoxia and anoxia, it also protects cells against reactive oxygen species thanks to its pseudoperoxidase activity. The protein is Myoglobin (MB) of Lagothrix lagotricha (Brown woolly monkey).